Consider the following 377-residue polypeptide: DNA-directed RNA polymerase subunit alpha (377 aa).

Positions Met1–Asp259 are alpha N-terminal domain (alpha-NTD). The interval Ile279–Gly377 is alpha C-terminal domain (alpha-CTD).

The protein belongs to the RNA polymerase alpha chain family. As to quaternary structure, homodimer. The RNAP catalytic core consists of 2 alpha, 1 beta, 1 beta' and 1 omega subunit. When a sigma factor is associated with the core the holoenzyme is formed, which can initiate transcription.

The enzyme catalyses RNA(n) + a ribonucleoside 5'-triphosphate = RNA(n+1) + diphosphate. Functionally, DNA-dependent RNA polymerase catalyzes the transcription of DNA into RNA using the four ribonucleoside triphosphates as substrates. In Chlamydia trachomatis serovar L2 (strain ATCC VR-902B / DSM 19102 / 434/Bu), this protein is DNA-directed RNA polymerase subunit alpha.